The primary structure comprises 214 residues: Probable transaldolase (214 aa).

Lys-83 serves as the catalytic Schiff-base intermediate with substrate.

It belongs to the transaldolase family. Type 3B subfamily.

The protein localises to the cytoplasm. The enzyme catalyses D-sedoheptulose 7-phosphate + D-glyceraldehyde 3-phosphate = D-erythrose 4-phosphate + beta-D-fructose 6-phosphate. It functions in the pathway carbohydrate degradation; pentose phosphate pathway; D-glyceraldehyde 3-phosphate and beta-D-fructose 6-phosphate from D-ribose 5-phosphate and D-xylulose 5-phosphate (non-oxidative stage): step 2/3. In terms of biological role, transaldolase is important for the balance of metabolites in the pentose-phosphate pathway. In Maridesulfovibrio salexigens (strain ATCC 14822 / DSM 2638 / NCIMB 8403 / VKM B-1763) (Desulfovibrio salexigens), this protein is Probable transaldolase.